The sequence spans 268 residues: Aliphatic sulfonates import ATP-binding protein SsuB 2 (268 aa).

Residues 16–230 (VQLRNVVRQF…DSGQAGFQSI (215 aa)) form the ABC transporter domain. An ATP-binding site is contributed by 48 to 55 (GASGSGKT).

This sequence belongs to the ABC transporter superfamily. Aliphatic sulfonates importer (TC 3.A.1.17.2) family. The complex is composed of two ATP-binding proteins (SsuB), two transmembrane proteins (SsuC) and a solute-binding protein (SsuA).

Its subcellular location is the cell inner membrane. The catalysed reaction is ATP + H2O + aliphatic sulfonate-[sulfonate-binding protein]Side 1 = ADP + phosphate + aliphatic sulfonateSide 2 + [sulfonate-binding protein]Side 1.. Functionally, part of the ABC transporter complex SsuABC involved in aliphatic sulfonates import. Responsible for energy coupling to the transport system. The chain is Aliphatic sulfonates import ATP-binding protein SsuB 2 from Pseudomonas savastanoi pv. phaseolicola (strain 1448A / Race 6) (Pseudomonas syringae pv. phaseolicola (strain 1448A / Race 6)).